A 278-amino-acid chain; its full sequence is Indole-3-glycerol phosphate synthase (278 aa).

It belongs to the TrpC family.

The enzyme catalyses 1-(2-carboxyphenylamino)-1-deoxy-D-ribulose 5-phosphate + H(+) = (1S,2R)-1-C-(indol-3-yl)glycerol 3-phosphate + CO2 + H2O. It functions in the pathway amino-acid biosynthesis; L-tryptophan biosynthesis; L-tryptophan from chorismate: step 4/5. The chain is Indole-3-glycerol phosphate synthase from Stutzerimonas stutzeri (strain A1501) (Pseudomonas stutzeri).